The sequence spans 268 residues: Undecaprenyl-diphosphatase (268 aa).

7 helical membrane-spanning segments follow: residues 41–61 (PGPSLSAIIQLGSVLALVCYF), 89–109 (IFIGTIPIILLGGTIKLFVPY), 114–134 (IFRSNLSIALVSFLMAILMYI), 155–175 (LIGLSQALAIFPGVSRSGVTI), 191–211 (FSFLLGMPAISFAAIVEFISS), 218–238 (FSFFPLIVGLTTTFLSSLLAI), and 248–268 (NGLKLFIIYRIVFGFVILLNL).

It belongs to the UppP family.

The protein resides in the cell inner membrane. The enzyme catalyses di-trans,octa-cis-undecaprenyl diphosphate + H2O = di-trans,octa-cis-undecaprenyl phosphate + phosphate + H(+). Functionally, catalyzes the dephosphorylation of undecaprenyl diphosphate (UPP). Confers resistance to bacitracin. The polypeptide is Undecaprenyl-diphosphatase (Prochlorococcus marinus (strain MIT 9312)).